A 1090-amino-acid polypeptide reads, in one-letter code: MSVYHLPTLLNPLVNAIFNCPEPERSPLKKLFANLKTRRFILLAPPSEYLLNYHDVKSKLPLHDLCYNAEFINSYILLMTENSYINTNSRDSHYETLDGKTVVIQWKNNVIHALNGFHIRRRLKILETKILPNFNDYFEGAADFIILFIDQPLNCEFVPNDYLQCFHNYEKIPKNAHAMPNLSIDSFQQERSSFENILHIHPARLTQLGQLFSSYRTLAPGDDPSRSIFESIVQQAFDGMKSDSLFKNFSNLYDLIHDYFELNLYDDIWSRLTTHFKGHEVDTEKYKYFSVNQLLTDFYSKDYGEFKLHDITLIERRLHLASKHLQKLALTHSYAEKSKILVETLQKLSGTTEMDSHQLELPDGLNNMTMDADTLISLFVLVVCRSEQKHLKSHLYYLQNFSNNSSSTKFGILGYAVSTLEAVVCYFEDFNKNTGNVAKANTLCEKTKNLLDKLSCENPTNEIEDLATYKDILTYRNEQGQSILSICITNHKNYILLDILSEYENDFPVEDLLEDETIDGSTLLIESIKAGNLEAAKVLIKIMLFNCTEEELVSYINKTDKYARTVAHYLTHEMDILKSIGNYIDWKRKNSSGQTPLFSIFRSYDQPNYEEMVKTAFDIANTWYRKHNSLFDYLDHTDNKGNSLLHVLKTNIPILLQLTKLDINEENYKGLTPLMVYVKYKRLSNIDAITKDHRLILEKVQNSTFFTCFDYAKDHSVLSKIGERGVKDSLFGLIYFHSLRYHNLNATTNITSVSNAEKPFATTVINMKTIQGLLRSILKDNPFTFLPLNTYIDEISHLNRSDLTIIGKTDVTSLLHQLTNCFNVLLFLKKIPENLFTDEASILYWMRINTSKRNQKPSGKENPKTMEPEEINMIQSFLRFNFDEISSFKASLNILRKVLIFINLKSDDFEDAYKGLNEMGRKLINSEASSAFKGIITNHNMFSELSLAELLENVRFLEQCTIQLSSFVQIILFEKIPNWWKHYGEFLALHKSYRKAFPNMVKPKSASDTSSRAPLGGFIETKREQSEQRLAVQIKASSKMLKELGSEIFVAHERLAEELSNYMEFRKACLDQRSLVAFATTNISVLQECV.

Residues 289 to 436 (FSVNQLLTDF…FEDFNKNTGN (148 aa)) enclose the VPS9 domain.

This sequence belongs to the UPF0507 family.

The chain is UPF0507 protein SCY_4172 from Saccharomyces cerevisiae (strain YJM789) (Baker's yeast).